The chain runs to 501 residues: NAD(P)H-quinone oxidoreductase chain 4, chloroplastic (501 aa).

Transmembrane regions (helical) follow at residues 5–25, 38–58, 88–108, 114–131, 135–155, 168–188, 209–229, 243–263, 273–293, 306–326, 331–351, 387–407, 417–437, and 464–484; these read FPWLTIIVVLPIFAASSIFFL, TCICLTELLLTTYVFCYHFQL, IGPILLTGFITTLATLAAWPV, LFYLLMLVMYSGQIGLFS, LLLFFIMWELELIPVYLLLSM, FILYTAGGSVFLLIGVLGMGL, ALEIIFYFGFLIAYAVKSPII, HYSTCMLLAGILLKMGAYGLI, AHSLFSPWLVIVGTIQIIYAA, IACSSVSHMGFIIIGIGSITD, GAILQILSHGFIGAALFFLSG, LALPGMSGFVAELVVFLGIIT, ILITFVMAIGMILTPIYLLSM, and FVSICIFLPVIGIGIYPDCVF.

This sequence belongs to the complex I subunit 4 family.

The protein localises to the plastid. It localises to the chloroplast thylakoid membrane. The catalysed reaction is a plastoquinone + NADH + (n+1) H(+)(in) = a plastoquinol + NAD(+) + n H(+)(out). It catalyses the reaction a plastoquinone + NADPH + (n+1) H(+)(in) = a plastoquinol + NADP(+) + n H(+)(out). In Dioscorea elephantipes (Elephant's foot yam), this protein is NAD(P)H-quinone oxidoreductase chain 4, chloroplastic.